The following is a 123-amino-acid chain: MKLKVTVNGTAYDVDVDVDKSHENPMGTILFGGGTGGAPAPRAAGGAGAGKAGEGEIPAPLAGTVSKILVKEGDTVKAGQTVLVLEAMKMETEINAPTDGKVEKVLVKERDAVQGGQGLIKIG.

Residues 46 to 123 (GAGAGKAGEG…QGGQGLIKIG (78 aa)) form the Biotinyl-binding domain. Position 89 is an N6-biotinyllysine (Lys89).

As to quaternary structure, transcarboxylase is composed of three subunits: 1.3S, 5S, and 12S. The core of the enzyme is composed of six 12S subunits. On each side of the core there are three pairs of 5S subunits. Each 5S dimer is attached to the core by two 1.3S subunits. Thus the total number of chains is 30 (6 + 12 + 12).

It carries out the reaction (S)-methylmalonyl-CoA + pyruvate = propanoyl-CoA + oxaloacetate. The biotinyl 1.3S subunit serves as a carboxyl carrier between the substrate-binding sites on the 12S and 5S subunits. This chain is Methylmalonyl-CoA carboxyltransferase 1.3S subunit, found in Propionibacterium freudenreichii subsp. shermanii.